The sequence spans 134 residues: Transcription antitermination protein NusB (134 aa).

The protein belongs to the NusB family.

Its function is as follows. Involved in transcription antitermination. Required for transcription of ribosomal RNA (rRNA) genes. Binds specifically to the boxA antiterminator sequence of the ribosomal RNA (rrn) operons. In Halalkalibacterium halodurans (strain ATCC BAA-125 / DSM 18197 / FERM 7344 / JCM 9153 / C-125) (Bacillus halodurans), this protein is Transcription antitermination protein NusB.